Consider the following 189-residue polypeptide: Peptidyl-tRNA hydrolase (189 aa).

Tyrosine 14 contacts tRNA. The active-site Proton acceptor is histidine 19. Residues phenylalanine 64, asparagine 66, and asparagine 112 each contribute to the tRNA site.

The protein belongs to the PTH family. As to quaternary structure, monomer.

It is found in the cytoplasm. It carries out the reaction an N-acyl-L-alpha-aminoacyl-tRNA + H2O = an N-acyl-L-amino acid + a tRNA + H(+). Functionally, hydrolyzes ribosome-free peptidyl-tRNAs (with 1 or more amino acids incorporated), which drop off the ribosome during protein synthesis, or as a result of ribosome stalling. Its function is as follows. Catalyzes the release of premature peptidyl moieties from peptidyl-tRNA molecules trapped in stalled 50S ribosomal subunits, and thus maintains levels of free tRNAs and 50S ribosomes. This is Peptidyl-tRNA hydrolase from Erythrobacter litoralis (strain HTCC2594).